The following is a 366-amino-acid chain: Cytochrome c peroxidase, mitochondrial (366 aa).

The active-site Proton acceptor is the His-123. Positions 195 to 206 are enriched in basic and acidic residues; sequence IEWRPGRVDDNT. The tract at residues 195-218 is disordered; the sequence is IEWRPGRVDDNTASKVPPNGRLPD. His-247 provides a ligand contact to heme b. The Tryptophan radical intermediate role is filled by Trp-263.

It belongs to the peroxidase family. Cytochrome c peroxidase subfamily. In terms of assembly, forms a one-to-one complex with cytochrome c. Heme b serves as cofactor.

Its subcellular location is the mitochondrion matrix. The protein resides in the mitochondrion intermembrane space. It carries out the reaction 2 Fe(II)-[cytochrome c] + H2O2 + 2 H(+) = 2 Fe(III)-[cytochrome c] + 2 H2O. Its function is as follows. Destroys radicals which are normally produced within the cells and which are toxic to biological systems. The protein is Cytochrome c peroxidase, mitochondrial (CCP1) of Candida albicans (strain SC5314 / ATCC MYA-2876) (Yeast).